An 850-amino-acid chain; its full sequence is MDQDIKTIIQYPVGATEFDIPFDYLSRKFVRVSLVSDDNRRLLSNITEYRYVSKTRVKLLVATGGFDRVEIRRFTSASERIVDFSDGSVLRAADLNVSQLQSAHIAEEARDVSLMSMLQDDAGNLDAKGRRIVNLSDPVADSDAATKGYVDEGLEHTLRFSESTVQPLPPLSLMDGKILAFSGGKPIGILPESGSAADVLVELSKVSGYNLIGKATSFANMRSASGLKVGDVVLLTSYYEGGTTGGGEFLVKAGSAVDDGGHICVPSGSTNIYLERITSEVHLLDYGILTELNGTGARIDMSGKLQSAINRAKSAVMPLVTGIPSENHYIRRGVYIEKGVDITGIKTITGCLSLLVDTRKLVGLVAPGYPDTKWALVNLNAQFNASGIVFGSTIGNQSFDSIVVRDVSDRGAPGAGQLHVTSGTMVKGALCATGFDGPGVSILGSYDSVIPDIRSVHCGNVAQWGVDIAAYRGSRPDNTNCMTIGRIECHDATDRALRCAADLSHVGEIHIEATLVTSTEQSTSATIADNGWGYANVLLQGLGTSYGSVRDLPVTGSVPPVVEVVADDTVVDSLSLPRSNLSLHYAFTTPRGCLSAGTINVGGDIIVTNGANTNIDSITMGGDSAKLTSASINLNVGILRAVGAASSVVSVGGNIGRLECASATLTGVDVLRGSITSLTLLDRNTISRTTAQSLNVVGTRNYLKSGFRVSGPATLGGVNNSASDTVFAGAVALKDPWKFIAVYINGNVTYSGNTTSSTYDVSFQDVFIEGELLLSGPCRIHADNMRAINMRIGQMQTGFIVMKNCTLSGGVEGNYIGSFNVPPIGSITQNFETGIPSVFTTSGWKPLTLA.

In the N-terminal section; belongs to the Teseptimavirus fiber family. Homotrimer.

It localises to the virion. Functions as a receptor binding protein (RBP) and probably mediates the attachment to the host capsular exopolysaccharides. Displays a depolymerase activity that specifically degrades the KN4-type polysaccharides of Klebsiella pneumoniae capsule, which allows the phage to reach the host cell membrane and bind the entry receptor. This chain is Depolymerase, capsule KN4-specific, found in Klebsiella pneumoniae (Bacteriophage KN4-1).